Consider the following 350-residue polypeptide: Heat-inducible transcription repressor HrcA (350 aa).

The protein belongs to the HrcA family.

Negative regulator of class I heat shock genes (grpE-dnaK-dnaJ and groELS operons). Prevents heat-shock induction of these operons. This is Heat-inducible transcription repressor HrcA from Xanthomonas euvesicatoria pv. vesicatoria (strain 85-10) (Xanthomonas campestris pv. vesicatoria).